A 417-amino-acid polypeptide reads, in one-letter code: Tyrosine--tRNA ligase (417 aa).

Tyrosine 39 lines the L-tyrosine pocket. Residues 44 to 53 (PTASSLHVGH) carry the 'HIGH' region motif. Residues tyrosine 176 and glutamine 180 each coordinate L-tyrosine. The short motif at 236 to 240 (KMGKS) is the 'KMSKS' region element. Lysine 239 is a binding site for ATP. The S4 RNA-binding domain occupies 350–416 (VGVLSLIVRA…GKKKHVLVRP (67 aa)).

The protein belongs to the class-I aminoacyl-tRNA synthetase family. TyrS type 1 subfamily. Homodimer.

The protein resides in the cytoplasm. The enzyme catalyses tRNA(Tyr) + L-tyrosine + ATP = L-tyrosyl-tRNA(Tyr) + AMP + diphosphate + H(+). In terms of biological role, catalyzes the attachment of tyrosine to tRNA(Tyr) in a two-step reaction: tyrosine is first activated by ATP to form Tyr-AMP and then transferred to the acceptor end of tRNA(Tyr). The sequence is that of Tyrosine--tRNA ligase from Agrobacterium fabrum (strain C58 / ATCC 33970) (Agrobacterium tumefaciens (strain C58)).